The chain runs to 349 residues: Probable G-protein coupled receptor 21 (349 aa).

Residues 1–32 (MNSTWDGNQSSHPFCLLALGYLETVRFCLLEV) lie on the Extracellular side of the membrane. Asn2 and Asn8 each carry an N-linked (GlcNAc...) asparagine glycan. Residues 33 to 53 (LIIVFLTVLIISGNIIVIFVF) traverse the membrane as a helical segment. Topologically, residues 54–75 (HCAPLLNHHSTSYFIQTMAYAD) are cytoplasmic. The chain crosses the membrane as a helical span at residues 76–96 (LLVGVSCLVPSLSLLYYPLPI). The Extracellular segment spans residues 97-104 (EEAMTCQV). The chain crosses the membrane as a helical span at residues 105–125 (FGFVVSVLKSISMASLACISI). Over 126 to 147 (DRYIAITKPLTYNTLVTPWRLR) the chain is Cytoplasmic. The helical transmembrane segment at 148-168 (LCIFLIWLYSTLVFLPSFFHW) threads the bilayer. Over 169–191 (GKPGYHGDVFQWCAESWHTNSYF) the chain is Extracellular. A helical membrane pass occupies residues 192–212 (TLFIVMMLYAPAALIVCFTYF). Over 213–252 (NIFRICQQHTKEISERQARFSSQNGETGEPQTCPDKRYAM) the chain is Cytoplasmic. A helical membrane pass occupies residues 253 to 273 (VLFRITSVFYVLWLPYIIYFL). Residues 274-283 (LESSTGCSSR) lie on the Extracellular side of the membrane. A helical membrane pass occupies residues 284 to 304 (LASFLTTWLAISNSFCNCIIY). Over 305 to 349 (SLSNSVFQRGLKGLSGSLCTSCASHTTAKDPYTVRCKGPPNGSHI) the chain is Cytoplasmic.

The protein belongs to the G-protein coupled receptor 1 family.

It localises to the cell membrane. Functionally, orphan receptor. This chain is Probable G-protein coupled receptor 21 (Gpr21), found in Mus musculus (Mouse).